Reading from the N-terminus, the 400-residue chain is CinA-like protein (400 aa).

The protein belongs to the CinA family.

The chain is CinA-like protein from Escherichia coli O9:H4 (strain HS).